Here is a 277-residue protein sequence, read N- to C-terminus: 3-methyl-2-oxobutanoate hydroxymethyltransferase (277 aa).

Mg(2+)-binding residues include aspartate 53 and aspartate 96. 3-methyl-2-oxobutanoate contacts are provided by residues 53–54 (DS), aspartate 96, and lysine 126. Glutamate 128 contacts Mg(2+). Glutamate 195 serves as the catalytic Proton acceptor.

It belongs to the PanB family. As to quaternary structure, homodecamer; pentamer of dimers. Mg(2+) serves as cofactor.

The protein resides in the cytoplasm. The enzyme catalyses 3-methyl-2-oxobutanoate + (6R)-5,10-methylene-5,6,7,8-tetrahydrofolate + H2O = 2-dehydropantoate + (6S)-5,6,7,8-tetrahydrofolate. The protein operates within cofactor biosynthesis; (R)-pantothenate biosynthesis; (R)-pantoate from 3-methyl-2-oxobutanoate: step 1/2. Its function is as follows. Catalyzes the reversible reaction in which hydroxymethyl group from 5,10-methylenetetrahydrofolate is transferred onto alpha-ketoisovalerate to form ketopantoate. The sequence is that of 3-methyl-2-oxobutanoate hydroxymethyltransferase from Chlorobaculum parvum (strain DSM 263 / NCIMB 8327) (Chlorobium vibrioforme subsp. thiosulfatophilum).